We begin with the raw amino-acid sequence, 112 residues long: Mediator of RNA polymerase II transcription subunit 22 (112 aa).

Positions 83-112 (KPEDGGEGQLADELLDKIEDTSDGVDKETA) are disordered. Residues 96–112 (LLDKIEDTSDGVDKETA) show a composition bias toward basic and acidic residues.

The protein belongs to the Mediator complex subunit 22 family. As to quaternary structure, component of the Mediator complex.

The protein localises to the nucleus. Functionally, component of the Mediator complex, a coactivator involved in the regulated transcription of nearly all RNA polymerase II-dependent genes. Mediator functions as a bridge to convey information from gene-specific regulatory proteins to the basal RNA polymerase II transcription machinery. Mediator is recruited to promoters by direct interactions with regulatory proteins and serves as a scaffold for the assembly of a functional preinitiation complex with RNA polymerase II and the general transcription factors. In Yarrowia lipolytica (strain CLIB 122 / E 150) (Yeast), this protein is Mediator of RNA polymerase II transcription subunit 22 (SRB6).